A 233-amino-acid chain; its full sequence is Protein Mis18-alpha (233 aa).

Residues serine 36, serine 39, and serine 40 each carry the phosphoserine modification. The region spanning 80 to 178 (PLVFLCSGCR…NVEAVESYVL (99 aa)) is the Mis18 domain. Residues cysteine 85, cysteine 88, cysteine 141, and cysteine 144 each coordinate Zn(2+). Residue lysine 162 forms a Glycyl lysine isopeptide (Lys-Gly) (interchain with G-Cter in SUMO2) linkage. Serine 233 carries the post-translational modification Phosphoserine.

It belongs to the mis18 family. As to quaternary structure, homodimer, and heterodimer with OIP5/MIS18B. Identified in a complex containing MIS18A, OIP5/MIS18B, MIS18BP1, RBBP7 and RBBP4.

The protein localises to the nucleus. It is found in the chromosome. Its subcellular location is the centromere. Its function is as follows. Required for recruitment of CENPA to centromeres and normal chromosome segregation during mitosis. The sequence is that of Protein Mis18-alpha (MIS18A) from Plecturocebus moloch (Dusky titi monkey).